The primary structure comprises 193 residues: NADH-quinone oxidoreductase subunit B (193 aa).

Cys-72, Cys-73, Cys-137, and Cys-167 together coordinate [4Fe-4S] cluster.

Belongs to the complex I 20 kDa subunit family. In terms of assembly, NDH-1 is composed of 14 different subunits. Subunits NuoB, C, D, E, F, and G constitute the peripheral sector of the complex. [4Fe-4S] cluster serves as cofactor.

It localises to the cell inner membrane. The enzyme catalyses a quinone + NADH + 5 H(+)(in) = a quinol + NAD(+) + 4 H(+)(out). NDH-1 shuttles electrons from NADH, via FMN and iron-sulfur (Fe-S) centers, to quinones in the respiratory chain. The immediate electron acceptor for the enzyme in this species is believed to be ubiquinone. Couples the redox reaction to proton translocation (for every two electrons transferred, four hydrogen ions are translocated across the cytoplasmic membrane), and thus conserves the redox energy in a proton gradient. The chain is NADH-quinone oxidoreductase subunit B from Rhizobium rhizogenes (strain K84 / ATCC BAA-868) (Agrobacterium radiobacter).